A 259-amino-acid chain; its full sequence is Protein unc-50 homolog B (259 aa).

The span at 1–11 (MLPTTSVSPRS) shows a compositional bias: polar residues. The segment at 1–21 (MLPTTSVSPRSPDNGILSPRD) is disordered. Residues 1-82 (MLPTTSVSPR…TKDQWARDDP (82 aa)) lie on the Cytoplasmic side of the membrane. Residues 83 to 103 (AFLVLLGIWLCVSTVGFGFVL) traverse the membrane as a helical segment. Over 104–109 (DMSFFE) the chain is Lumenal. Residues 110-130 (TFTLLLWVVFIDCVGVGLLIA) traverse the membrane as a helical segment. The Cytoplasmic segment spans residues 131–158 (TSMWFVSNKYMVNRQGKDYDVEWGYTFD). The chain crosses the membrane as a helical span at residues 159–179 (VHLNAFYPLLVILHFIQLFFI). Residues 180-181 (NH) are Lumenal-facing. A helical transmembrane segment spans residues 182 to 202 (VILTGWFIGCFVGNTLWLIAI). The Cytoplasmic segment spans residues 203–222 (GYYIYITFLGYSALPFLKNT). Residues 223 to 243 (VVLLYPFAALALLYILSLALG) form a helical membrane-spanning segment. Topologically, residues 244–259 (WNFTAKLCLFYKYRVR) are lumenal.

The protein belongs to the unc-50 family.

It is found in the nucleus inner membrane. The protein localises to the golgi apparatus membrane. Its function is as follows. Involved in the cell surface expression of neuronal nicotinic receptors. Binds RNA. This Xenopus laevis (African clawed frog) protein is Protein unc-50 homolog B (unc50-b).